A 122-amino-acid chain; its full sequence is Small ribosomal subunit protein uS13 (122 aa).

Residues 99–122 (RGQRTHTNARTRKGPAKAIAGKKK) form a disordered region.

Belongs to the universal ribosomal protein uS13 family. As to quaternary structure, part of the 30S ribosomal subunit. Forms a loose heterodimer with protein S19. Forms two bridges to the 50S subunit in the 70S ribosome.

Functionally, located at the top of the head of the 30S subunit, it contacts several helices of the 16S rRNA. In the 70S ribosome it contacts the 23S rRNA (bridge B1a) and protein L5 of the 50S subunit (bridge B1b), connecting the 2 subunits; these bridges are implicated in subunit movement. Contacts the tRNAs in the A and P-sites. The chain is Small ribosomal subunit protein uS13 from Rhodopseudomonas palustris (strain BisB5).